A 178-amino-acid chain; its full sequence is Translation initiation factor IF-3 (178 aa).

The protein belongs to the IF-3 family. As to quaternary structure, monomer.

Its subcellular location is the cytoplasm. IF-3 binds to the 30S ribosomal subunit and shifts the equilibrium between 70S ribosomes and their 50S and 30S subunits in favor of the free subunits, thus enhancing the availability of 30S subunits on which protein synthesis initiation begins. This chain is Translation initiation factor IF-3, found in Macrococcus caseolyticus (strain JCSC5402) (Macrococcoides caseolyticum).